We begin with the raw amino-acid sequence, 148 residues long: Nucleoside diphosphate kinase A (148 aa).

6 residues coordinate ATP: Lys9, Phe57, Arg85, Thr91, Arg102, and Asn112. The active-site Pros-phosphohistidine intermediate is the His115.

Belongs to the NDK family. Requires Mg(2+) as cofactor.

It carries out the reaction a 2'-deoxyribonucleoside 5'-diphosphate + ATP = a 2'-deoxyribonucleoside 5'-triphosphate + ADP. The enzyme catalyses a ribonucleoside 5'-diphosphate + ATP = a ribonucleoside 5'-triphosphate + ADP. Functionally, major role in the synthesis of nucleoside triphosphates other than ATP. The ATP gamma phosphate is transferred to the NDP beta phosphate via a ping-pong mechanism, using a phosphorylated active-site intermediate. This is Nucleoside diphosphate kinase A from Flaveria bidentis (Coastal plain yellowtops).